A 444-amino-acid polypeptide reads, in one-letter code: MNLKIRIIGAGLAGCEAAWQCARRGLDVELYEMRPVKSTPAHQTSDFAELVCSNSLKSAGENSAPWLLKEEMRRGGSLLLEIAQKTSVPAGHALAVDRGAFAAEVTRVIEAEPRIRVVRGEVTKIDENDALTVIATGPLTSDALSQEIARLSGNTHLYFYDSISPIVEADSIDMSRVYMAARYDKGTADYINCPMNKEEYDRFLDALIEAHSVDAKEWENLNYFEGCLPIEEIARRGRDTLRFGPMKPVGLTDPKTGRYPYAVVQLRQENLRADSYNLVGFQNHLKYGDQARVMRLIPGLENAKFLRYGQIHRNTYINSPTLLTETLRMKEHPNVFFAGQISGVEGYVESIATGQMAGMHVSTVAMGHEPVAPPRATAFGSLVNYICHAEAKHFQPANITFDLLPQLDEAARRKVRDKKERHRMVCEAALKEFDGWLATSQIFQ.

An FAD-binding site is contributed by 9–14 (GAGLAG).

It belongs to the MnmG family. TrmFO subfamily. Requires FAD as cofactor.

Its subcellular location is the cytoplasm. It catalyses the reaction uridine(54) in tRNA + (6R)-5,10-methylene-5,6,7,8-tetrahydrofolate + NADH + H(+) = 5-methyluridine(54) in tRNA + (6S)-5,6,7,8-tetrahydrofolate + NAD(+). The enzyme catalyses uridine(54) in tRNA + (6R)-5,10-methylene-5,6,7,8-tetrahydrofolate + NADPH + H(+) = 5-methyluridine(54) in tRNA + (6S)-5,6,7,8-tetrahydrofolate + NADP(+). Functionally, catalyzes the folate-dependent formation of 5-methyl-uridine at position 54 (M-5-U54) in all tRNAs. The sequence is that of Methylenetetrahydrofolate--tRNA-(uracil-5-)-methyltransferase TrmFO from Koribacter versatilis (strain Ellin345).